Here is a 385-residue protein sequence, read N- to C-terminus: Cytochrome b (385 aa).

Helical transmembrane passes span 34–54 (FGSLTGLCLALQIISGLLLTM), 78–99 (WFIRNVHISGASLFFTCMFIHI), 114–134 (WYSGVILFILSMLTAFLGYVL), and 179–199 (FLVLHFLMPFSMIAVSLIHLV). Heme b is bound by residues His84 and His98. Residues His183 and His197 each coordinate heme b. His202 is an a ubiquinone binding site. A run of 4 helical transmembrane segments spans residues 227-247 (FKDILGFSFLLTFLITFSLLL), 289-309 (LAGIIALVMSLSVLLLMPILI), 321-341 (LMQVTFWLMVCNFIFLSWLGA), and 348-368 (FILMSQISSFIYFFIFFVMFP).

This sequence belongs to the cytochrome b family. The cytochrome bc1 complex contains 3 respiratory subunits (MT-CYB, CYC1 and UQCRFS1), 2 core proteins (UQCRC1 and UQCRC2) and probably 6 low-molecular weight proteins. The cofactor is heme b.

It is found in the mitochondrion inner membrane. Functionally, component of the ubiquinol-cytochrome c reductase complex (complex III or cytochrome b-c1 complex) that is part of the mitochondrial respiratory chain. The b-c1 complex mediates electron transfer from ubiquinol to cytochrome c. Contributes to the generation of a proton gradient across the mitochondrial membrane that is then used for ATP synthesis. The protein is Cytochrome b (MT-CYB) of Eptatretus burgeri (Inshore hagfish).